A 494-amino-acid chain; its full sequence is Glutamyl-tRNA(Gln) amidotransferase subunit A (494 aa).

Catalysis depends on charge relay system residues Lys-81 and Ser-156. The active-site Acyl-ester intermediate is the Ser-180.

This sequence belongs to the amidase family. GatA subfamily. Heterotrimer of A, B and C subunits.

It carries out the reaction L-glutamyl-tRNA(Gln) + L-glutamine + ATP + H2O = L-glutaminyl-tRNA(Gln) + L-glutamate + ADP + phosphate + H(+). Functionally, allows the formation of correctly charged Gln-tRNA(Gln) through the transamidation of misacylated Glu-tRNA(Gln) in organisms which lack glutaminyl-tRNA synthetase. The reaction takes place in the presence of glutamine and ATP through an activated gamma-phospho-Glu-tRNA(Gln). The polypeptide is Glutamyl-tRNA(Gln) amidotransferase subunit A (Mycolicibacterium gilvum (strain PYR-GCK) (Mycobacterium gilvum (strain PYR-GCK))).